A 78-amino-acid polypeptide reads, in one-letter code: MTKFSLLDHESVPKHEIISEGELKSVLSKYLIEKEQLPKIKVQDPVSKEIGAVVGDVVRITRKSQTAGEADYYRLVIE.

Belongs to the archaeal Rpo5/eukaryotic RPB5 RNA polymerase subunit family. As to quaternary structure, part of the RNA polymerase complex.

Its subcellular location is the cytoplasm. The catalysed reaction is RNA(n) + a ribonucleoside 5'-triphosphate = RNA(n+1) + diphosphate. Functionally, DNA-dependent RNA polymerase (RNAP) catalyzes the transcription of DNA into RNA using the four ribonucleoside triphosphates as substrates. This Methanosarcina acetivorans (strain ATCC 35395 / DSM 2834 / JCM 12185 / C2A) protein is DNA-directed RNA polymerase subunit Rpo5.